Reading from the N-terminus, the 282-residue chain is MLLAVPSKGRLQEPTLKLLEAVGIKPLASDERALVLPTSWPDVNLIKARPEDIPYLVESGRVWAGVTGHDYVLESGSNVVEALDLEFGRGRLVVAVPKSSGIKSVEELPPGARVATKFVNIAYNYFAELGKRVRVVKVTGSVEVLPQLGIADAILDVMATGTTLEVHGLTPIATVLETSARLVVHPEYTSHELTKKLVTFIKGYFAAQGKKMIFLNVPAARLEAVLSVLPAMEAPSVTKLAKGDIYEVFSVVSEDVLPDLVMKLKNAGAKDIVVTSIEKLIS.

It belongs to the ATP phosphoribosyltransferase family. Long subfamily. Mg(2+) is required as a cofactor.

It is found in the cytoplasm. The catalysed reaction is 1-(5-phospho-beta-D-ribosyl)-ATP + diphosphate = 5-phospho-alpha-D-ribose 1-diphosphate + ATP. Its pathway is amino-acid biosynthesis; L-histidine biosynthesis; L-histidine from 5-phospho-alpha-D-ribose 1-diphosphate: step 1/9. Its activity is regulated as follows. Feedback inhibited by histidine. Its function is as follows. Catalyzes the condensation of ATP and 5-phosphoribose 1-diphosphate to form N'-(5'-phosphoribosyl)-ATP (PR-ATP). Has a crucial role in the pathway because the rate of histidine biosynthesis seems to be controlled primarily by regulation of HisG enzymatic activity. This Pyrobaculum neutrophilum (strain DSM 2338 / JCM 9278 / NBRC 100436 / V24Sta) (Thermoproteus neutrophilus) protein is ATP phosphoribosyltransferase.